Here is a 395-residue protein sequence, read N- to C-terminus: Glyceraldehyde-3-phosphate dehydrogenase, testis-specific (395 aa).

Residues 1-60 (MSKRDIVLTNVTVVQLLRQPCPEPRVEAEPEPPAQPQPQPEPIKEEVPPPPPPPPAPKKV) form a testis-specific N-terminal extension region. Positions 19 to 59 (QPCPEPRVEAEPEPPAQPQPQPEPIKEEVPPPPPPPPAPKK) are disordered. Composition is skewed to pro residues over residues 31 to 41 (EPPAQPQPQPE) and 48 to 57 (PPPPPPPPAP). NAD(+)-binding positions include 72–73 (RI), Asp93, and Lys138. D-glyceraldehyde 3-phosphate contacts are provided by residues 210–212 (SCT), Thr241, 270–271 (TG), and Arg293. The active-site Nucleophile is the Cys211. Asn375 contributes to the NAD(+) binding site.

Belongs to the glyceraldehyde-3-phosphate dehydrogenase family. Homotetramer.

It localises to the cytoplasm. It carries out the reaction D-glyceraldehyde 3-phosphate + phosphate + NAD(+) = (2R)-3-phospho-glyceroyl phosphate + NADH + H(+). It participates in carbohydrate degradation; glycolysis; pyruvate from D-glyceraldehyde 3-phosphate: step 1/5. In terms of biological role, may play an important role in regulating the switch between different pathways for energy production during spermiogenesis and in the spermatozoon. Required for sperm motility and male fertility. The polypeptide is Glyceraldehyde-3-phosphate dehydrogenase, testis-specific (GAPDHS) (Bos taurus (Bovine)).